A 517-amino-acid polypeptide reads, in one-letter code: Ribosome assembly protein 4 (517 aa).

The segment at 1-25 (MATLAPPPSKRQRREEIQRTQTQQD) is disordered. Positions 34-128 (LGSFKANFID…TITLSAEPQA (95 aa)) are ubiquitin-like (UBL) domain. 8 WD repeats span residues 144–184 (GHGQ…PKFT), 187–226 (GHTG…QVNQ), 230–277 (GHAK…HVLS), 278–316 (GHKG…LVHN), 351–397 (EERR…SKPV), 402–441 (GHQN…FIKN), 444–483 (GHVA…LAMD), and 486–517 (GHED…TWRN).

The protein belongs to the NLE1/RSA4 family. Associates with the pre-60S ribosomal particle. Interacts (via WD repeats) with uL18. Interacts (via UBL domain) with MDN1 (via VWFA/MIDAS domain). Interacts (via WD repeats) with NSA2.

Its subcellular location is the nucleus. It localises to the nucleolus. Involved in ribosome biogenesis. Required for processing and efficient intra-nuclear transport of pre-60S ribosomal subunits. Interacts with the AAA-ATPase Midasin, which is essential for the ATP-dependent dissociation of a group of nonribosomal factors from the pre-60S particle. The protein is Ribosome assembly protein 4 of Chaetomium thermophilum (strain DSM 1495 / CBS 144.50 / IMI 039719) (Thermochaetoides thermophila).